The chain runs to 440 residues: Xylose isomerase (440 aa).

Residues His101 and Asp104 contribute to the active site. Glu232, Glu268, His271, Asp296, Asp307, Asp309, and Asp339 together coordinate Mg(2+).

This sequence belongs to the xylose isomerase family. Homotetramer. Mg(2+) is required as a cofactor.

It localises to the cytoplasm. It catalyses the reaction alpha-D-xylose = alpha-D-xylulofuranose. This Escherichia coli O17:K52:H18 (strain UMN026 / ExPEC) protein is Xylose isomerase.